We begin with the raw amino-acid sequence, 499 residues long: Glucosylglycerol-phosphate synthase (499 aa).

This sequence belongs to the glycosyltransferase 20 family. Interacts with GGP-P. In terms of processing, seems to be degraded, at least in vitro, by FtsH2. In an ftsH2 disruption strain inactive GGPS accumulates.

The protein resides in the cytoplasm. It catalyses the reaction ADP-alpha-D-glucose + sn-glycerol 3-phosphate = 2-O-(alpha-D-glucopyranosyl)-sn-glycerol 3-phosphate + ADP + H(+). It participates in glycan metabolism; glucosylglycerol biosynthesis. In terms of biological role, involved in salt tolerance by producing GG-phosphate from ADP-glucose and glycerol-3-phosphate (G3P), an intermediate in the synthesis of the osmolyte glucosylglycerol (GG). In Synechocystis sp. (strain ATCC 27184 / PCC 6803 / Kazusa), this protein is Glucosylglycerol-phosphate synthase (ggpS).